A 218-amino-acid chain; its full sequence is CTD kinase subunit gamma (218 aa).

One can recognise a CID domain in the interval 2 to 138; the sequence is DPFEGRMTFL…DAMATVEAHE (137 aa). Residues 137 to 157 are disordered; that stretch reads HEQASKSGDTSTSGAISKNDI. Over residues 141 to 152 the composition is skewed to polar residues; that stretch reads SKSGDTSTSGAI.

It belongs to the CTK3 family. CTDK-I consists of three subunits, ctk1/lsk1, ctk2/lsc1 and ctk3 (also called alpha, beta and gamma).

The protein localises to the cytoplasm. The protein resides in the nucleus. In terms of biological role, subunit of the CTDK-I complex, which hyperphosphorylates the C-terminal heptapeptide repeat domain (CTD) of the largest RNA polymerase II subunit. As part of the CTDK-I complex, involved in RNA polymerase II transcriptional elongation and pre-mRNA 3'-end processing. Together with ctk2, required for ctk1/lsk1 CTD kinase activation. The sequence is that of CTD kinase subunit gamma from Schizosaccharomyces pombe (strain 972 / ATCC 24843) (Fission yeast).